The primary structure comprises 121 residues: MSITKDQIIEAVASMSVMEVVELIEAMEEKFGVSAAAAVMAGPAAAEAVEEKTEFDVVLTAAGANKVAVIKAVRGATGLGLKEAKDLVEAAPANLKEAVSKDEAEALKKELEAAGASVEIK.

This sequence belongs to the bacterial ribosomal protein bL12 family. As to quaternary structure, homodimer. Part of the ribosomal stalk of the 50S ribosomal subunit. Forms a multimeric L10(L12)X complex, where L10 forms an elongated spine to which 2 to 4 L12 dimers bind in a sequential fashion. Binds GTP-bound translation factors.

Forms part of the ribosomal stalk which helps the ribosome interact with GTP-bound translation factors. Is thus essential for accurate translation. The chain is Large ribosomal subunit protein bL12 from Aeromonas hydrophila subsp. hydrophila (strain ATCC 7966 / DSM 30187 / BCRC 13018 / CCUG 14551 / JCM 1027 / KCTC 2358 / NCIMB 9240 / NCTC 8049).